A 640-amino-acid polypeptide reads, in one-letter code: Threonine--tRNA ligase (640 aa).

The TGS domain occupies 1 to 61 (MPVITLPDGS…SNDATLQIIT (61 aa)). A catalytic region spans residues 242 to 533 (DHRKIGKQLD…LIEHYAGVFP (292 aa)). Residues C333, H384, and H510 each coordinate Zn(2+).

The protein belongs to the class-II aminoacyl-tRNA synthetase family. Homodimer. Requires Zn(2+) as cofactor.

The protein localises to the cytoplasm. The catalysed reaction is tRNA(Thr) + L-threonine + ATP = L-threonyl-tRNA(Thr) + AMP + diphosphate + H(+). Its function is as follows. Catalyzes the attachment of threonine to tRNA(Thr) in a two-step reaction: L-threonine is first activated by ATP to form Thr-AMP and then transferred to the acceptor end of tRNA(Thr). Also edits incorrectly charged L-seryl-tRNA(Thr). The polypeptide is Threonine--tRNA ligase (Pseudomonas putida (strain GB-1)).